A 100-amino-acid chain; its full sequence is Urease subunit gamma (100 aa).

It belongs to the urease gamma subunit family. In terms of assembly, heterotrimer of UreA (gamma), UreB (beta) and UreC (alpha) subunits. Three heterotrimers associate to form the active enzyme.

Its subcellular location is the cytoplasm. It catalyses the reaction urea + 2 H2O + H(+) = hydrogencarbonate + 2 NH4(+). Its pathway is nitrogen metabolism; urea degradation; CO(2) and NH(3) from urea (urease route): step 1/1. The polypeptide is Urease subunit gamma (Cereibacter sphaeroides (strain ATCC 17025 / ATH 2.4.3) (Rhodobacter sphaeroides)).